The following is a 307-amino-acid chain: Ribosomal RNA small subunit methyltransferase H (307 aa).

S-adenosyl-L-methionine is bound by residues G33–Y35, D51, F82, D96, and Q103.

It belongs to the methyltransferase superfamily. RsmH family.

It is found in the cytoplasm. The enzyme catalyses cytidine(1402) in 16S rRNA + S-adenosyl-L-methionine = N(4)-methylcytidine(1402) in 16S rRNA + S-adenosyl-L-homocysteine + H(+). Specifically methylates the N4 position of cytidine in position 1402 (C1402) of 16S rRNA. The protein is Ribosomal RNA small subunit methyltransferase H of Rickettsia massiliae (strain Mtu5).